A 159-amino-acid chain; its full sequence is 2-C-methyl-D-erythritol 2,4-cyclodiphosphate synthase (159 aa).

Residues Asp8 and His10 each contribute to the a divalent metal cation site. 4-CDP-2-C-methyl-D-erythritol 2-phosphate-binding positions include Asp8 to His10 and His34 to Ser35. Residue His42 participates in a divalent metal cation binding. Residues Asp56–Gly58, Phe61–Asp65, Ala100–Ala106, Thr132–Glu135, Phe139, and Arg142 each bind 4-CDP-2-C-methyl-D-erythritol 2-phosphate.

This sequence belongs to the IspF family. As to quaternary structure, homotrimer. A divalent metal cation serves as cofactor.

It carries out the reaction 4-CDP-2-C-methyl-D-erythritol 2-phosphate = 2-C-methyl-D-erythritol 2,4-cyclic diphosphate + CMP. The protein operates within isoprenoid biosynthesis; isopentenyl diphosphate biosynthesis via DXP pathway; isopentenyl diphosphate from 1-deoxy-D-xylulose 5-phosphate: step 4/6. Involved in the biosynthesis of isopentenyl diphosphate (IPP) and dimethylallyl diphosphate (DMAPP), two major building blocks of isoprenoid compounds. Catalyzes the conversion of 4-diphosphocytidyl-2-C-methyl-D-erythritol 2-phosphate (CDP-ME2P) to 2-C-methyl-D-erythritol 2,4-cyclodiphosphate (ME-CPP) with a corresponding release of cytidine 5-monophosphate (CMP). The polypeptide is 2-C-methyl-D-erythritol 2,4-cyclodiphosphate synthase (Aliivibrio salmonicida (strain LFI1238) (Vibrio salmonicida (strain LFI1238))).